The primary structure comprises 257 residues: Tryptophan synthase alpha chain (257 aa).

Active-site proton acceptor residues include Glu47 and Asp58.

This sequence belongs to the TrpA family. In terms of assembly, tetramer of two alpha and two beta chains.

The enzyme catalyses (1S,2R)-1-C-(indol-3-yl)glycerol 3-phosphate + L-serine = D-glyceraldehyde 3-phosphate + L-tryptophan + H2O. It participates in amino-acid biosynthesis; L-tryptophan biosynthesis; L-tryptophan from chorismate: step 5/5. In terms of biological role, the alpha subunit is responsible for the aldol cleavage of indoleglycerol phosphate to indole and glyceraldehyde 3-phosphate. The polypeptide is Tryptophan synthase alpha chain (Listeria innocua serovar 6a (strain ATCC BAA-680 / CLIP 11262)).